Consider the following 708-residue polypeptide: MSLFNVFRKEIEWGGRKLVLETGRIARQADGAVMASLGDTTVLCTAVGAKTKSKFDFFPLTVNYQEKTFAAGKIPGGFFKREGRPSEKETLVSRLIDRPIRPLFVHGYKNETQLVCTVLCHDLENNPDIVAIVGASAALTLSGLPFLGPIGAARVGLIDGAFVLNPTRDQMADSVLDLVVAGTREGVLMVESEAHELSEQQMLDAVMFGHEGYQPVIDAIIALAEQCAREPRAIEPPAPEAEAVAAKVREVGEAGLRDAYKEADKMVRHDKVDAVRDAVTAAFAGDDAALALAGAAFKDLEKDIVRGSILDTGLRIDGRDTKTVRPIEIYPGILPRAHGSALFTRGETQALVTTTLGTGQDEQIIDALEGEYRENFMLHYNFPPYSVGEAGRMGSPGRREIGHGKLAWRAIHPMMPAKDAFPYTVRVVSEITESNGSSSMATVCGTSLALMDAGVPLKNAVAGIAMGLIKEDERFAVLSDILGDEDHLGDMDFKVAGTANGITSLQMDIKITSITKEIMNVALNQAKDGRIHILGEMTKALGNARSDVSDFAPRITTIKVPPQKVREVIGSGGKVIREITEVTGTKIDIEDDGTIKIASADAEATQRAVDWIKGIVAEPEIGVVYTGKVVKIMDFGAFVNFLGTRDGLVHISELSQDRVKKVGDVVNVGDQVKVKCVGFDDRGKIKLSMKQVDQVTGADLSTQAPAEE.

Positions 486 and 492 each coordinate Mg(2+). Residues 553-612 enclose the KH domain; it reads PRITTIKVPPQKVREVIGSGGKVIREITEVTGTKIDIEDDGTIKIASADAEATQRAVDWI. One can recognise an S1 motif domain in the interval 622–690; it reads GVVYTGKVVK…DRGKIKLSMK (69 aa).

Belongs to the polyribonucleotide nucleotidyltransferase family. It depends on Mg(2+) as a cofactor.

The protein resides in the cytoplasm. It carries out the reaction RNA(n+1) + phosphate = RNA(n) + a ribonucleoside 5'-diphosphate. Involved in mRNA degradation. Catalyzes the phosphorolysis of single-stranded polyribonucleotides processively in the 3'- to 5'-direction. In Rhodospirillum rubrum (strain ATCC 11170 / ATH 1.1.1 / DSM 467 / LMG 4362 / NCIMB 8255 / S1), this protein is Polyribonucleotide nucleotidyltransferase.